A 67-amino-acid polypeptide reads, in one-letter code: Conotoxin LiC33 (67 aa).

An N-terminal signal peptide occupies residues 1 to 22; it reads MRCVPVFIILLLLSPSAPSVDA. Residues 23–48 constitute a propeptide that is removed on maturation; the sequence is HPKTKDDVPLASFHDDAKRTLQRLWI. F63 carries the phenylalanine amide modification. Positions 65–67 are excised as a propeptide; the sequence is KGK.

It belongs to the conotoxin T superfamily. Contains 2 disulfide bonds that can be either 'C1-C3, C2-C4' or 'C1-C4, C2-C3', since these disulfide connectivities have been observed for conotoxins with cysteine framework V (for examples, see AC P0DQQ7 and AC P81755). In terms of tissue distribution, expressed by the venom duct.

It localises to the secreted. This Conus lividus (Livid cone) protein is Conotoxin LiC33.